A 614-amino-acid chain; its full sequence is Vitamin B12 transporter BtuB (614 aa).

Positions 1–20 (MIKKASLLTACSVTAFSAWA) are cleaved as a signal peptide. Residues 26–33 (DTLVVTAN) carry the TonB box motif. Positions 38-152 (PRSTVLAPTT…IGGVVNIITT (115 aa)) constitute a TBDR plug domain. Cyanocob(III)alamin contacts are provided by residues Leu83, Ser85, Asn92, and 110 to 111 (VS). The 460-residue stretch at 155 to 614 (EPGTEISAGW…EYTLSGSYTF (460 aa)) folds into the TBDR beta-barrel domain. Transmembrane regions (beta stranded) follow at residues 158-165 (TEISAGWG), 169-178 (YQNYDVSTQQ), and 184-195 (TRVTLLGDYAHT). Ca(2+) is bound by residues Asp199, Gln211, Asp213, and Asp215. 2 beta stranded membrane-spanning segments follow: residues 217–227 (FLSKTLYGALE) and 232–248 (DAWS…NRTN). Positions 249 and 250 each coordinate Ca(2+). Ala251 contributes to the cyanocob(III)alamin binding site. Position 261 (Asp261) interacts with Ca(2+). Beta stranded transmembrane passes span 263–277 (RKLY…LRYN), 279–296 (ELIK…KDYN), 309–325 (TLDE…NNII), 328–337 (HGNVGAGVDW), 353–369 (YDQR…QQVG), 371–381 (FTFEGAARSDD), 385–400 (FGRH…WEFI), 403–417 (YRFI…KAPN), 434–443 (KSKQWEGAFE), 449–458 (VNWRISGYRN), 473–490 (YYNE…TANF), 494–509 (PLTH…ARNA), 517–529 (RRAK…QLDW), and 535–550 (DWGI…YDKD). Thr309 provides a ligand contact to cyanocob(III)alamin. Arg517 is a binding site for cyanocob(III)alamin. Residue Tyr551 coordinates cyanocob(III)alamin. Beta stranded transmembrane passes span 558-572 (TVKM…LAVA), 585-596 (IANLFDKDYETV), and 602-614 (AGRE…SYTF). The short motif at 597–614 (YGYQTAGREYTLSGSYTF) is the TonB C-terminal box element.

The protein belongs to the TonB-dependent receptor family. BtuB (TC 1.B.14.3.1) subfamily.

The protein resides in the cell outer membrane. Functionally, involved in the active translocation of vitamin B12 (cyanocobalamin) across the outer membrane to the periplasmic space. It derives its energy for transport by interacting with the trans-periplasmic membrane protein TonB. This is Vitamin B12 transporter BtuB from Shigella dysenteriae serotype 1 (strain Sd197).